The chain runs to 256 residues: 5-keto-4-deoxy-D-glucarate aldolase (256 aa).

The active-site Proton acceptor is the His-50. Gln-151 contacts substrate. A Mg(2+)-binding site is contributed by Glu-153. Substrate contacts are provided by Ser-178 and Asp-179. Residue Asp-179 coordinates Mg(2+).

It belongs to the HpcH/HpaI aldolase family. KDGluc aldolase subfamily. As to quaternary structure, homohexamer; trimer of dimers. Mg(2+) serves as cofactor.

It carries out the reaction 5-dehydro-4-deoxy-D-glucarate = 2-hydroxy-3-oxopropanoate + pyruvate. The enzyme catalyses 2-dehydro-3-deoxy-D-glucarate = 2-hydroxy-3-oxopropanoate + pyruvate. It functions in the pathway carbohydrate acid metabolism; galactarate degradation; D-glycerate from galactarate: step 2/3. In terms of biological role, catalyzes the reversible retro-aldol cleavage of both 5-keto-4-deoxy-D-glucarate and 2-keto-3-deoxy-D-glucarate to pyruvate and tartronic semialdehyde. The protein is 5-keto-4-deoxy-D-glucarate aldolase of Salmonella agona (strain SL483).